Here is a 392-residue protein sequence, read N- to C-terminus: Formate-dependent phosphoribosylglycinamide formyltransferase (392 aa).

N(1)-(5-phospho-beta-D-ribosyl)glycinamide contacts are provided by residues 15–16 and glutamate 75; that span reads EL. ATP-binding positions include arginine 107, lysine 148, 153 to 158, 188 to 191, and glutamate 196; these read SSGKGQ and EEFL. One can recognise an ATP-grasp domain in the interval 112–302; that stretch reads DLASEELALL…EFELHLRAVL (191 aa). The Mg(2+) site is built by glutamate 261 and glutamate 273. Residues aspartate 280, lysine 350, and 357 to 358 contribute to the N(1)-(5-phospho-beta-D-ribosyl)glycinamide site; that span reads RR.

The protein belongs to the PurK/PurT family. As to quaternary structure, homodimer.

The enzyme catalyses N(1)-(5-phospho-beta-D-ribosyl)glycinamide + formate + ATP = N(2)-formyl-N(1)-(5-phospho-beta-D-ribosyl)glycinamide + ADP + phosphate + H(+). The protein operates within purine metabolism; IMP biosynthesis via de novo pathway; N(2)-formyl-N(1)-(5-phospho-D-ribosyl)glycinamide from N(1)-(5-phospho-D-ribosyl)glycinamide (formate route): step 1/1. In terms of biological role, involved in the de novo purine biosynthesis. Catalyzes the transfer of formate to 5-phospho-ribosyl-glycinamide (GAR), producing 5-phospho-ribosyl-N-formylglycinamide (FGAR). Formate is provided by PurU via hydrolysis of 10-formyl-tetrahydrofolate. This chain is Formate-dependent phosphoribosylglycinamide formyltransferase, found in Prochlorococcus marinus (strain MIT 9303).